Consider the following 307-residue polypeptide: Glutenin, low molecular weight subunit 1D1 (307 aa).

The first 23 residues, 1–23 (MKTFLVFALLAVAATSAIAQMET), serve as a signal peptide directing secretion. 2 disordered regions span residues 31–88 (RPWQ…ILPQ) and 105–126 (PFSQ…QQQQ). Low complexity predominate over residues 43-88 (TFPQQPLFSQQQQQQLFPQQPSFSQQQPPFWQQQPPFSQQQPILPQ).

It belongs to the gliadin/glutenin family. As to quaternary structure, disulfide-bridge linked aggregates. In terms of tissue distribution, expressed in endosperm, but not in husk and leaf tissues.

In terms of biological role, glutenins are high-molecular weight seed storage proteins of wheat endosperm. Thought to be responsible for the visco-elastic property of wheat dough. The polypeptide is Glutenin, low molecular weight subunit 1D1 (Triticum aestivum (Wheat)).